Reading from the N-terminus, the 66-residue chain is DNA-directed RNA polymerase subunit Rpo10 (66 aa).

Residues Cys7, Cys10, Cys44, and Cys45 each contribute to the Zn(2+) site.

Belongs to the archaeal Rpo10/eukaryotic RPB10 RNA polymerase subunit family. Part of the RNA polymerase complex. It depends on Zn(2+) as a cofactor.

Its subcellular location is the cytoplasm. The catalysed reaction is RNA(n) + a ribonucleoside 5'-triphosphate = RNA(n+1) + diphosphate. Functionally, DNA-dependent RNA polymerase (RNAP) catalyzes the transcription of DNA into RNA using the four ribonucleoside triphosphates as substrates. The chain is DNA-directed RNA polymerase subunit Rpo10 from Staphylothermus marinus (strain ATCC 43588 / DSM 3639 / JCM 9404 / F1).